A 438-amino-acid chain; its full sequence is Coiled-coil domain-containing protein 78 (438 aa).

Coiled coils occupy residues 74-105 and 217-246; these read HLHE…LRGD and SCQG…YVLR. A disordered region spans residues 345–381; the sequence is FSHREDQHGGPGALLSSPKKRPGGASQGGTSEPQGLD.

The protein belongs to the CCDC78 family. As to expression, expressed primarily in skeletal muscle.

The protein localises to the cytoplasm. The protein resides in the cytoskeleton. Its subcellular location is the microtubule organizing center. It is found in the centrosome. It localises to the centriole. The protein localises to the perinuclear region. The protein resides in the cell membrane. Its subcellular location is the sarcolemma. It is found in the sarcoplasmic reticulum. Functionally, component of the deuterosome, a structure that promotes de novo centriole amplification in multiciliated cells that can generate more than 100 centrioles. Deuterosome-mediated centriole amplification occurs in terminally differentiated multiciliated cells (G1/0) and not in S phase. Essential for centriole amplification and is required for CEP152 localization to the deuterosome. The chain is Coiled-coil domain-containing protein 78 (CCDC78) from Homo sapiens (Human).